Consider the following 394-residue polypeptide: Elongation factor Tu 2 (394 aa).

The region spanning 10–204 (KPHVNVGTIG…ALDSYIPEPE (195 aa)) is the tr-type G domain. Positions 19 to 26 (GHVDHGKT) are G1. GTP is bound at residue 19 to 26 (GHVDHGKT). T26 serves as a coordination point for Mg(2+). A G2 region spans residues 60 to 64 (GITIS). Positions 81–84 (DCPG) are G3. Residues 81 to 85 (DCPGH) and 136 to 139 (NKCD) contribute to the GTP site. A G4 region spans residues 136 to 139 (NKCD). Positions 174–176 (SAL) are G5.

The protein belongs to the TRAFAC class translation factor GTPase superfamily. Classic translation factor GTPase family. EF-Tu/EF-1A subfamily. Monomer.

The protein localises to the cytoplasm. It catalyses the reaction GTP + H2O = GDP + phosphate + H(+). Functionally, GTP hydrolase that promotes the GTP-dependent binding of aminoacyl-tRNA to the A-site of ribosomes during protein biosynthesis. The sequence is that of Elongation factor Tu 2 from Pseudoalteromonas translucida (strain TAC 125).